Reading from the N-terminus, the 501-residue chain is Cytoplasmic tRNA 2-thiolation protein 2 (501 aa).

The segment covering 1 to 12 (MCEMSEEYRESA) has biased composition (basic and acidic residues). 2 disordered regions span residues 1 to 23 (MCEM…RLGT) and 192 to 214 (GVER…PTTA). Position 2 is an N-acetylcysteine (Cys-2). At Ser-492 the chain carries Phosphoserine.

Belongs to the CTU2/NCS2 family. In terms of assembly, component of a complex at least composed of URM1, CTU2/NCS2 and CTU1/ATPBD3.

Its subcellular location is the cytoplasm. Its pathway is tRNA modification; 5-methoxycarbonylmethyl-2-thiouridine-tRNA biosynthesis. Functionally, plays a central role in 2-thiolation of mcm(5)S(2)U at tRNA wobble positions of tRNA(Lys), tRNA(Glu) and tRNA(Gln). May act by forming a heterodimer with CTU1/ATPBD3 that ligates sulfur from thiocarboxylated URM1 onto the uridine of tRNAs at wobble position. This chain is Cytoplasmic tRNA 2-thiolation protein 2, found in Bos taurus (Bovine).